We begin with the raw amino-acid sequence, 153 residues long: Small ribosomal subunit protein bS16 (153 aa).

It belongs to the bacterial ribosomal protein bS16 family.

This is Small ribosomal subunit protein bS16 from Leifsonia xyli subsp. xyli (strain CTCB07).